We begin with the raw amino-acid sequence, 425 residues long: MKKWDYQNVRGTQDYLPEDESVRVWLRRELEEVFQQYGCKPMETPMINYTDLLASKYGGGAEIKKEMYTLTDRGKRALALRYDLTIPFAKVMAMNPDIRKPFKRYEIGKVFRDGPIKAGRFREFTQCDVDVAGVDSPLAEAELLEMATEVFRRIGLNMTIQYNNRKLLTGMLDICGVSKDQHSAVILILDKREKIGDKQVVNELKEMGVDGKAISKIAQWLKQMSQSGIVDFATDRPTTPIMAEGIAELQELEEALRYLNIDSQCTFNPFLARGLEIYTGTVYELFLTEGAIQSSVGSGGRYDQAISGLTGEEQPMPTVGISFGIDVIYTALKMEGRINQKPLLDYYVIPLQKQKEALAVASSLRKQGFRVDVEFKNKKLTKALDRANKEKIPFVILIGEEEVASGRYKLKNMETGAEQHVPFSF.

This sequence belongs to the class-II aminoacyl-tRNA synthetase family. In terms of assembly, homodimer.

It localises to the cytoplasm. It catalyses the reaction tRNA(His) + L-histidine + ATP = L-histidyl-tRNA(His) + AMP + diphosphate + H(+). In Shouchella clausii (strain KSM-K16) (Alkalihalobacillus clausii), this protein is Histidine--tRNA ligase 2.